The sequence spans 250 residues: Low affinity immunoglobulin gamma Fc region receptor III-A (250 aa).

Positions 1–16 (MWQLLPPAALLLLVSA) are cleaved as a signal peptide. Over 17 to 208 (DTQTADPSKA…VSSFFLPWHQ (192 aa)) the chain is Extracellular. Ig-like C2-type domains are found at residues 23–105 (PSKA…LEVH) and 99–189 (PVKL…VQIT). Disulfide bonds link C47–C89 and C128–C172. Residues N56 and N63 are each glycosylated (N-linked (GlcNAc...) asparagine). N180 carries an N-linked (GlcNAc...) asparagine glycan. The chain crosses the membrane as a helical span at residues 209 to 225 (ITFCLVMGVLFAVDTGL). The Cytoplasmic portion of the chain corresponds to 226 to 250 (YFSVRRHLQSSEEWRDGKVTWSKGP).

As to quaternary structure, forms a heterooligomeric complex with ITAM-containing signaling subunits FCER1G. Interacts (via transmembrane domain) with signaling subunits; this interaction is a prerequisite for receptor complex expression on the cell surface and intracellular signal transduction. Binds the Fc region of antigen-complexed IgG. Expressed in gamma-delta T cells.

The protein resides in the cell membrane. Its function is as follows. Receptor for the invariable Fc fragment of immunoglobulin gamma (IgG). Optimally activated upon binding of clustered antigen-IgG complexes displayed on cell surfaces, triggers lysis of antibody-coated cells, a process known as antibody-dependent cellular cytotoxicity (ADCC). Does not bind free monomeric IgG, thus avoiding inappropriate effector cell activation in the absence of antigenic trigger. Mediates IgG effector functions on natural killer (NK) cells. Binds antigen-IgG complexes generated upon infection and triggers NK cell-dependent cytokine production and degranulation to limit viral load and propagation. Fc-binding subunit that associates with FCER1G adapters to form functional signaling complexes. Following the engagement of antigen-IgG complexes, triggers phosphorylation of immunoreceptor tyrosine-based activation motif (ITAM)-containing adapter with subsequent activation of phosphatidylinositol 3-kinase signaling and sustained elevation of intracellular calcium that ultimately drive NK cell activation. Mediates enhanced ADCC in response to afucosylated IgGs. This chain is Low affinity immunoglobulin gamma Fc region receptor III-A, found in Bos taurus (Bovine).